Consider the following 640-residue polypeptide: SUMO-activating enzyme subunit 2 (640 aa).

Residues glycine 24–glycine 29, aspartate 48, asparagine 56–arginine 59, lysine 72, serine 95–isoleucine 96, and aspartate 117–arginine 122 contribute to the ATP site. 2 residues coordinate Zn(2+): cysteine 158 and cysteine 161. A Glycyl lysine isopeptide (Lys-Gly) (interchain with G-Cter in SUMO1) cross-link involves residue lysine 164. Cysteine 173 acts as the Glycyl thioester intermediate in catalysis. A Glycyl lysine isopeptide (Lys-Gly) (interchain with G-Cter in SUMO) cross-link involves residue lysine 190. Residues alanine 202–glutamate 231 form a disordered region. At serine 207 the chain carries Phosphoserine. Basic and acidic residues predominate over residues alanine 222–glutamate 231. Lysine 236 participates in a covalent cross-link: Glycyl lysine isopeptide (Lys-Gly) (interchain with G-Cter in SUMO1); alternate. Residues lysine 236 and lysine 257 each participate in a glycyl lysine isopeptide (Lys-Gly) (interchain with G-Cter in SUMO2); alternate cross-link. Glycyl lysine isopeptide (Lys-Gly) (interchain with G-Cter in SUMO); alternate cross-links involve residues lysine 257 and lysine 271. At lysine 271 the chain carries N6-acetyllysine; alternate. Lysine 275 participates in a covalent cross-link: Glycyl lysine isopeptide (Lys-Gly) (interchain with G-Cter in SUMO). Lysine 371 participates in a covalent cross-link: Glycyl lysine isopeptide (Lys-Gly) (interchain with G-Cter in SUMO2). Lysine 420 participates in a covalent cross-link: Glycyl lysine isopeptide (Lys-Gly) (interchain with G-Cter in SUMO1); alternate. Residue lysine 420 forms a Glycyl lysine isopeptide (Lys-Gly) (interchain with G-Cter in SUMO2); alternate linkage. Residues cysteine 441 and cysteine 444 each coordinate Zn(2+). Position 507 is a phosphoserine (serine 507). A Glycyl lysine isopeptide (Lys-Gly) (interchain with G-Cter in SUMO2) cross-link involves residue lysine 540. The segment covering proline 551 to alanine 563 has biased composition (basic and acidic residues). The interval proline 551–aspartate 640 is disordered. The segment covering serine 565–glutamine 582 has biased composition (polar residues). Acidic residues predominate over residues glutamate 583–serine 597. Serine 592 carries the phosphoserine modification. A compositionally biased stretch (basic and acidic residues) spans glutamate 606–lysine 630. Lysine 611 participates in a covalent cross-link: Glycyl lysine isopeptide (Lys-Gly) (interchain with G-Cter in SUMO). A Glycyl lysine isopeptide (Lys-Gly) (interchain with G-Cter in SUMO); alternate cross-link involves residue lysine 613. Lysine 613 carries the post-translational modification N6-acetyllysine; alternate. Glycyl lysine isopeptide (Lys-Gly) (interchain with G-Cter in SUMO) cross-links involve residues lysine 617 and lysine 623. Positions glutamate 631–aspartate 640 are enriched in acidic residues.

This sequence belongs to the ubiquitin-activating E1 family. In terms of assembly, heterodimer of SAE1 and UBA2/SAE2. The heterodimer corresponds to the two domains that are encoded on a single polypeptide chain in ubiquitin-activating enzyme E1. Interacts with UBE2I. In terms of processing, sumoylated with SUMO1 and SUMO2/3 and by UBC9. Sumoylation at Lys-236 inhibits enzymatic activity. Sumoylation at the C-terminal lysine cluster plays an essential role in nuclear trafficking.

It localises to the cytoplasm. The protein resides in the nucleus. It participates in protein modification; protein sumoylation. In terms of biological role, the heterodimer acts as an E1 ligase for SUMO1, SUMO2, SUMO3, and probably SUMO4. It mediates ATP-dependent activation of SUMO proteins followed by formation of a thioester bond between a SUMO protein and a conserved active site cysteine residue on UBA2/SAE2. This is SUMO-activating enzyme subunit 2 (UBA2) from Homo sapiens (Human).